Here is a 289-residue protein sequence, read N- to C-terminus: Serine/threonine-protein phosphatase Pgam5, mitochondrial (289 aa).

The protein belongs to the phosphoglycerate mutase family. BPG-dependent PGAM subfamily. Interacts with Pk92B/ASK1.

It is found in the mitochondrion outer membrane. It catalyses the reaction O-phospho-L-seryl-[protein] + H2O = L-seryl-[protein] + phosphate. It carries out the reaction O-phospho-L-threonyl-[protein] + H2O = L-threonyl-[protein] + phosphate. Displays phosphatase activity for serine/threonine residues, and dephosphorylates and activates Pk92B kinase. Has apparently no phosphoglycerate mutase activity. The polypeptide is Serine/threonine-protein phosphatase Pgam5, mitochondrial (Drosophila yakuba (Fruit fly)).